We begin with the raw amino-acid sequence, 105 residues long: Synaptic plasticity regulator PANTS (105 aa).

This sequence belongs to the UPF0545 family. In terms of assembly, interacts with RTN4 isoform A/Nogo-A; the interaction results in enhanced RTN4-mediated inhibition of AMPA receptor clustering. Also interacts with NCAM1, RANBP2 and CCT8. Rapidly degraded by proteolysis following neuronal stimulation, resulting in increased AMPA receptor clustering.

Its subcellular location is the synapse. It localises to the synaptic cleft. Functionally, negatively regulates long-term potentiation and modulates adult synaptic plasticity. Stabilizes the interaction of RTN4 isoform A/Nogo-A with its receptors, inhibiting clustering of postsynaptic AMPA receptors at synaptic sites. Upon neuronal stimulation, degraded at synapses, reducing RTN4 signaling and allowing AMPA receptor clustering at individual synapses. This Pongo abelii (Sumatran orangutan) protein is Synaptic plasticity regulator PANTS.